Consider the following 167-residue polypeptide: Dimethylamine corrinoid protein 3 (167 aa).

Residues 1 to 44 form the B12-binding N-terminal domain; the sequence is MNEVGVRFERGKLFLPHVMMAADAMTAGVNALKDLMPEGSASSK. Residues 45-167 enclose the B12-binding domain; it reads MGVIVNGTVE…AVTKAKELLA (123 aa). A methylcob(III)alamin-binding site is contributed by His58.

This sequence belongs to the methylamine corrinoid protein family.

The protein operates within one-carbon metabolism; methanogenesis from dimethylamine. Acts as a methyl group carrier between MtbB and MtbA. The polypeptide is Dimethylamine corrinoid protein 3 (mtbC3) (Methanosarcina mazei (strain ATCC BAA-159 / DSM 3647 / Goe1 / Go1 / JCM 11833 / OCM 88) (Methanosarcina frisia)).